Consider the following 141-residue polypeptide: MGSRAVLLLKGPSPPKHSILFLLNHKKISPAPSIRRFTTKATANGSSLEPPDVARLAETARISLTPQQVEEFGPKIRQVIDWHALLSVDLDSVEPSIRADTEGDNLRHDNPETFENREAIIAAVPNYEDPYVKVPKVLNKE.

It belongs to the GatC family. In terms of assembly, subunit of the heterotrimeric GatCAB amidotransferase (AdT) complex, composed of A, B and C subunits.

It localises to the mitochondrion. The protein localises to the plastid. The protein resides in the chloroplast. The enzyme catalyses L-glutamyl-tRNA(Gln) + L-glutamine + ATP + H2O = L-glutaminyl-tRNA(Gln) + L-glutamate + ADP + phosphate + H(+). Functionally, allows the formation of correctly charged Gln-tRNA(Gln) through the transamidation of misacylated Glu-tRNA(Gln) in chloroplasts and mitochondria. The reaction takes place in the presence of glutamine and ATP through an activated gamma-phospho-Glu-tRNA(Gln). The polypeptide is Glutamyl-tRNA(Gln) amidotransferase subunit C, chloroplastic/mitochondrial (Populus trichocarpa (Western balsam poplar)).